Reading from the N-terminus, the 135-residue chain is Large ribosomal subunit protein mL41 (135 aa).

Residues 1-13 constitute a mitochondrion transit peptide; it reads MGFLTAVTQGLVR.

It belongs to the mitochondrion-specific ribosomal protein mL41 family. As to quaternary structure, component of the mitochondrial ribosome large subunit (39S) which comprises a 16S rRNA and about 50 distinct proteins. Interacts with BCL2.

Its subcellular location is the mitochondrion. Functionally, component of the mitochondrial ribosome large subunit. Also involved in apoptosis and cell cycle. Enhances p53/TP53 stability, thereby contributing to p53/TP53-induced apoptosis in response to growth-inhibitory condition. Enhances p53/TP53 translocation to the mitochondria. Has the ability to arrest the cell cycle at the G1 phase, possibly by stabilizing the CDKN1A and CDKN1B (p27Kip1) proteins. The chain is Large ribosomal subunit protein mL41 (Mrpl41) from Mus musculus (Mouse).